Consider the following 255-residue polypeptide: NAD kinase (255 aa).

D44 (proton acceptor) is an active-site residue. NAD(+) contacts are provided by residues 44–45 (DG), H49, 114–115 (NE), D144, A152, 155–160 (SAYNLS), and Q216.

Belongs to the NAD kinase family. It depends on a divalent metal cation as a cofactor.

Its subcellular location is the cytoplasm. The enzyme catalyses NAD(+) + ATP = ADP + NADP(+) + H(+). Functionally, involved in the regulation of the intracellular balance of NAD and NADP, and is a key enzyme in the biosynthesis of NADP. Catalyzes specifically the phosphorylation on 2'-hydroxyl of the adenosine moiety of NAD to yield NADP. The sequence is that of NAD kinase from Rickettsia canadensis (strain McKiel).